A 122-amino-acid polypeptide reads, in one-letter code: Large ribosomal subunit protein uL14 (122 aa).

The protein belongs to the universal ribosomal protein uL14 family. As to quaternary structure, part of the 50S ribosomal subunit. Forms a cluster with proteins L3 and L19. In the 70S ribosome, L14 and L19 interact and together make contacts with the 16S rRNA in bridges B5 and B8.

Functionally, binds to 23S rRNA. Forms part of two intersubunit bridges in the 70S ribosome. The polypeptide is Large ribosomal subunit protein uL14 (Hyphomonas neptunium (strain ATCC 15444)).